Reading from the N-terminus, the 440-residue chain is 3-phosphoshikimate 1-carboxyvinyltransferase (440 aa).

3-phosphoshikimate contacts are provided by Lys-28, Ser-29, and Arg-33. Position 28 (Lys-28) interacts with phosphoenolpyruvate. The phosphoenolpyruvate site is built by Gly-98 and Arg-126. Residues Ser-171, Gln-173, Asp-318, and Lys-345 each coordinate 3-phosphoshikimate. Gln-173 is a binding site for phosphoenolpyruvate. The active-site Proton acceptor is Asp-318. Arg-349 and Arg-391 together coordinate phosphoenolpyruvate.

It belongs to the EPSP synthase family. As to quaternary structure, monomer.

The protein localises to the cytoplasm. It carries out the reaction 3-phosphoshikimate + phosphoenolpyruvate = 5-O-(1-carboxyvinyl)-3-phosphoshikimate + phosphate. It participates in metabolic intermediate biosynthesis; chorismate biosynthesis; chorismate from D-erythrose 4-phosphate and phosphoenolpyruvate: step 6/7. Its function is as follows. Catalyzes the transfer of the enolpyruvyl moiety of phosphoenolpyruvate (PEP) to the 5-hydroxyl of shikimate-3-phosphate (S3P) to produce enolpyruvyl shikimate-3-phosphate and inorganic phosphate. This is 3-phosphoshikimate 1-carboxyvinyltransferase from Anaeromyxobacter sp. (strain K).